The following is a 229-amino-acid chain: MAKKGKKFQDAAKQVEALKAYAPKEALELVKKIDFAKFDATVETVYKLNVDTKQADQQLRGAVVLPNGTGKEQTVIVFAKGAKAEAAKAAGADVVGDDDLVQRIQDGWLDFDVAIATPDMMGQVGRLGRVLGPKNLMPNPKTGTVTMDVEKAVADSKSGKVTYRTDRDGNVHVPIGKVSFDVDQLLGNLQTINDTIVRLRPASVKGAYVQNVSVASTFGPGVKVDFSQF.

It belongs to the universal ribosomal protein uL1 family. As to quaternary structure, part of the 50S ribosomal subunit.

Binds directly to 23S rRNA. The L1 stalk is quite mobile in the ribosome, and is involved in E site tRNA release. Functionally, protein L1 is also a translational repressor protein, it controls the translation of the L11 operon by binding to its mRNA. This chain is Large ribosomal subunit protein uL1, found in Pediococcus pentosaceus (strain ATCC 25745 / CCUG 21536 / LMG 10740 / 183-1w).